The following is a 205-amino-acid chain: Protein N-terminal glutamine amidohydrolase (205 aa).

Active-site residues include Cys20, His74, and Asp90.

This sequence belongs to the NTAQ1 family. Monomer.

The catalysed reaction is N-terminal L-glutaminyl-[protein] + H2O = N-terminal L-glutamyl-[protein] + NH4(+). Mediates the side-chain deamidation of N-terminal glutamine residues to glutamate, an important step in N-end rule pathway of protein degradation. Conversion of the resulting N-terminal glutamine to glutamate renders the protein susceptible to arginylation, polyubiquitination and degradation as specified by the N-end rule. Does not act on substrates with internal or C-terminal glutamine and does not act on non-glutamine residues in any position. This is Protein N-terminal glutamine amidohydrolase (tun) from Drosophila pseudoobscura pseudoobscura (Fruit fly).